The chain runs to 239 residues: Ribosomal RNA small subunit methyltransferase G (239 aa).

S-adenosyl-L-methionine contacts are provided by residues G79, F84, 130–131 (AE), and R149.

This sequence belongs to the methyltransferase superfamily. RNA methyltransferase RsmG family.

It is found in the cytoplasm. Specifically methylates the N7 position of a guanine in 16S rRNA. The sequence is that of Ribosomal RNA small subunit methyltransferase G from Pelotomaculum thermopropionicum (strain DSM 13744 / JCM 10971 / SI).